The sequence spans 486 residues: UDP-N-acetylmuramoyl-L-alanyl-D-glutamate--2,6-diaminopimelate ligase (486 aa).

Position 31 (Ser-31) interacts with UDP-N-acetyl-alpha-D-muramoyl-L-alanyl-D-glutamate. 109–115 contributes to the ATP binding site; it reads GTNGKTT. UDP-N-acetyl-alpha-D-muramoyl-L-alanyl-D-glutamate is bound by residues Asn-150, 151-152, Ser-178, and Arg-186; that span reads TT. Lys-218 carries the N6-carboxylysine modification. Meso-2,6-diaminopimelate-binding positions include Arg-381, 405 to 408, Gly-455, and Glu-459; that span reads DNPR. A Meso-diaminopimelate recognition motif motif is present at residues 405–408; that stretch reads DNPR.

Belongs to the MurCDEF family. MurE subfamily. The cofactor is Mg(2+). Carboxylation is probably crucial for Mg(2+) binding and, consequently, for the gamma-phosphate positioning of ATP.

It localises to the cytoplasm. The catalysed reaction is UDP-N-acetyl-alpha-D-muramoyl-L-alanyl-D-glutamate + meso-2,6-diaminopimelate + ATP = UDP-N-acetyl-alpha-D-muramoyl-L-alanyl-gamma-D-glutamyl-meso-2,6-diaminopimelate + ADP + phosphate + H(+). It functions in the pathway cell wall biogenesis; peptidoglycan biosynthesis. In terms of biological role, catalyzes the addition of meso-diaminopimelic acid to the nucleotide precursor UDP-N-acetylmuramoyl-L-alanyl-D-glutamate (UMAG) in the biosynthesis of bacterial cell-wall peptidoglycan. This is UDP-N-acetylmuramoyl-L-alanyl-D-glutamate--2,6-diaminopimelate ligase from Halalkalibacterium halodurans (strain ATCC BAA-125 / DSM 18197 / FERM 7344 / JCM 9153 / C-125) (Bacillus halodurans).